The chain runs to 198 residues: Recombination protein RecR (198 aa).

The C4-type zinc-finger motif lies at 57-72 (CEKCNTFTEAQICEVC). A Toprim domain is found at 80-175 (TLLCVVETPA…AVTRLARGVP (96 aa)).

Belongs to the RecR family.

May play a role in DNA repair. It seems to be involved in an RecBC-independent recombinational process of DNA repair. It may act with RecF and RecO. In Paraburkholderia phytofirmans (strain DSM 17436 / LMG 22146 / PsJN) (Burkholderia phytofirmans), this protein is Recombination protein RecR.